A 388-amino-acid chain; its full sequence is Succinate--CoA ligase [ADP-forming] subunit beta (388 aa).

Residues 9–244 (KQLFARYGLP…HSQEDEREAH (236 aa)) enclose the ATP-grasp domain. Residues Lys-46, 53-55 (GRG), Glu-99, Thr-102, and Glu-107 contribute to the ATP site. 2 residues coordinate Mg(2+): Asn-199 and Asp-213. Substrate-binding positions include Asn-264 and 321–323 (GIV).

This sequence belongs to the succinate/malate CoA ligase beta subunit family. Heterotetramer of two alpha and two beta subunits. Mg(2+) serves as cofactor.

The enzyme catalyses succinate + ATP + CoA = succinyl-CoA + ADP + phosphate. It carries out the reaction GTP + succinate + CoA = succinyl-CoA + GDP + phosphate. It functions in the pathway carbohydrate metabolism; tricarboxylic acid cycle; succinate from succinyl-CoA (ligase route): step 1/1. Its function is as follows. Succinyl-CoA synthetase functions in the citric acid cycle (TCA), coupling the hydrolysis of succinyl-CoA to the synthesis of either ATP or GTP and thus represents the only step of substrate-level phosphorylation in the TCA. The beta subunit provides nucleotide specificity of the enzyme and binds the substrate succinate, while the binding sites for coenzyme A and phosphate are found in the alpha subunit. This is Succinate--CoA ligase [ADP-forming] subunit beta from Sodalis glossinidius (strain morsitans).